A 1122-amino-acid polypeptide reads, in one-letter code: RecBCD enzyme subunit RecC (1122 aa).

It belongs to the RecC family. Heterotrimer of RecB, RecC and RecD. All subunits contribute to DNA-binding. Interacts with YgbT (Cas1). In terms of assembly, (Microbial infection) Lambda virus GamS protein interacts with the enzyme without displacing any of the subunits.

After reacting with DNA bearing a Chi site the holoenzyme is disassembled and loses exonuclease activity, DNA unwinding and Chi-directed DNA cleavage; RecB remains complexed with ssDNA, which may prevent holoenzyme reassembly. High levels of Mg(2+) (13 mM MgCl(2+)) or incubation with DNase allow holoenzyme reassembly, suggesting it is DNA bound to RecB that prevents reassembly. Its activity is regulated as follows. (Microbial infection) RecBCD is inhibited by the lambda virus gam protein (both GamL and GamS isoforms); in vitro a short preincubation prior to adding DNA results in maximal inhibition. In terms of biological role, a helicase/nuclease that prepares dsDNA breaks (DSB) for recombinational DNA repair. Binds to DSBs and unwinds DNA via a rapid (&gt;1 kb/second) and highly processive (&gt;30 kb) ATP-dependent bidirectional helicase. Unwinds dsDNA until it encounters a Chi (crossover hotspot instigator, 5'-GCTGGTGG-3') sequence from the 3' direction. Cuts ssDNA a few nucleotides 3' to Chi site, by nicking one strand or switching the strand degraded (depending on the reaction conditions). The properties and activities of the enzyme are changed at Chi. The Chi-altered holoenzyme produces a long 3'-ssDNA overhang which facilitates RecA-binding to the ssDNA for homologous DNA recombination and repair. Holoenzyme degrades any linearized DNA that is unable to undergo homologous recombination. In the holoenzyme this subunit almost certainly recognizes the wild-type Chi sequence, when added to isolated RecB increases its ATP-dependent helicase processivity. The RecBC complex requires the RecD subunit for nuclease activity, but can translocate along ssDNA in both directions. The RecBCD complex does not unwind G-quadruplex DNA. The protein is RecBCD enzyme subunit RecC of Escherichia coli (strain K12).